Here is a 456-residue protein sequence, read N- to C-terminus: CBL-interacting serine/threonine-protein kinase 2 (456 aa).

Residues Y12–F266 form the Protein kinase domain. Residues L18–V26 and K41 contribute to the ATP site. D134 serves as the catalytic Proton acceptor. Residues D152–E181 form an activation loop region. Position 156 is a phosphoserine (S156). Position 170 is a phosphothreonine (T170). Residues M280–P309 form a disordered region. One can recognise an NAF domain in the interval P309–G333. Residues K338–I367 form a PPI region.

This sequence belongs to the protein kinase superfamily. CAMK Ser/Thr protein kinase family. SNF1 subfamily. Interacts with CBL2, CBL3 and CBL5. Mn(2+) is required as a cofactor.

The catalysed reaction is L-seryl-[protein] + ATP = O-phospho-L-seryl-[protein] + ADP + H(+). It catalyses the reaction L-threonyl-[protein] + ATP = O-phospho-L-threonyl-[protein] + ADP + H(+). In terms of biological role, CIPK serine-threonine protein kinases interact with CBL proteins. Binding of a CBL protein to the regulatory NAF domain of CIPK protein lead to the activation of the kinase in a calcium-dependent manner. In Arabidopsis thaliana (Mouse-ear cress), this protein is CBL-interacting serine/threonine-protein kinase 2 (CIPK2).